The primary structure comprises 255 residues: MSKLNWNVEGVTESLKAKATALGVDVISQEQVAAIAAELAAETGKDVTARSVGSKLRKEGFEVQKANEVQKSPWTPEQEAELVDFLNAHAGQYTYAEIAAAVAGGQFGAKQVQGKILSLEMTASVKPTEKAAAVRSFTPDEETDFVNQVVAGATIEAIAAHFGRNIKQIRGKALSLLREGRIAAMPVQETSSAKTREDLLEGLDLVNMTVAEIAEKTGKSERGVKSMLSRRGLVAKDYDGAAKRAKLDAKAAAAE.

Its function is as follows. Putative transcription factor required for the expression of viral late genes. In Escherichia coli (Enterobacteria phage T5), this protein is Putative transcription factor D5.